A 124-amino-acid chain; its full sequence is MATINQLVRKPRVRQVTKSNVPALQACPQRRGVCTRVYTTTPKKPNSALRKVARVRLTNGFEVTSYIGGEGHNLQEHSVILIRGGRVKDLPGVRYHTVRGALDCSGVSDRRQGRSKYGAKRPKS.

Aspartate 89 is modified (3-methylthioaspartic acid). Positions 105-124 (SGVSDRRQGRSKYGAKRPKS) are disordered. Residues 113-124 (GRSKYGAKRPKS) are compositionally biased toward basic residues.

This sequence belongs to the universal ribosomal protein uS12 family. As to quaternary structure, part of the 30S ribosomal subunit. Contacts proteins S8 and S17. May interact with IF1 in the 30S initiation complex.

In terms of biological role, with S4 and S5 plays an important role in translational accuracy. Its function is as follows. Interacts with and stabilizes bases of the 16S rRNA that are involved in tRNA selection in the A site and with the mRNA backbone. Located at the interface of the 30S and 50S subunits, it traverses the body of the 30S subunit contacting proteins on the other side and probably holding the rRNA structure together. The combined cluster of proteins S8, S12 and S17 appears to hold together the shoulder and platform of the 30S subunit. In Colwellia psychrerythraea (strain 34H / ATCC BAA-681) (Vibrio psychroerythus), this protein is Small ribosomal subunit protein uS12.